The primary structure comprises 562 residues: Potassium-transporting ATPase potassium-binding subunit (562 aa).

The next 12 helical transmembrane spans lie at 6-26 (FLLI…LGGF), 62-82 (YALA…VLLM), 132-152 (GLTV…FALI), 175-195 (LYVL…QGVL), 253-273 (FVQM…FGQV), 283-303 (LIWA…YAEL), 327-347 (FGIL…CGAV), 356-376 (ALGG…FGGV), 379-399 (GLYG…LMIG), 416-436 (MTAL…ALAL), 483-503 (LLLA…VLAI), and 526-546 (LFIG…FIPA).

Belongs to the KdpA family. As to quaternary structure, the system is composed of three essential subunits: KdpA, KdpB and KdpC.

The protein resides in the cell inner membrane. In terms of biological role, part of the high-affinity ATP-driven potassium transport (or Kdp) system, which catalyzes the hydrolysis of ATP coupled with the electrogenic transport of potassium into the cytoplasm. This subunit binds the periplasmic potassium ions and delivers the ions to the membrane domain of KdpB through an intramembrane tunnel. The chain is Potassium-transporting ATPase potassium-binding subunit from Yersinia pseudotuberculosis serotype IB (strain PB1/+).